A 239-amino-acid polypeptide reads, in one-letter code: tRNA1(Val) (adenine(37)-N6)-methyltransferase (239 aa).

Belongs to the methyltransferase superfamily. tRNA (adenine-N(6)-)-methyltransferase family.

The protein localises to the cytoplasm. It carries out the reaction adenosine(37) in tRNA1(Val) + S-adenosyl-L-methionine = N(6)-methyladenosine(37) in tRNA1(Val) + S-adenosyl-L-homocysteine + H(+). In terms of biological role, specifically methylates the adenine in position 37 of tRNA(1)(Val) (anticodon cmo5UAC). In Vibrio campbellii (strain ATCC BAA-1116), this protein is tRNA1(Val) (adenine(37)-N6)-methyltransferase.